The primary structure comprises 248 residues: Aquaporin TIP2-3 (248 aa).

The next 2 helical transmembrane spans lie at 20-40 and 54-74; these read AYVA…GSAI and AGLV…VSMA. The NPA 1 signature appears at 83 to 85; the sequence is NPA. Transmembrane regions (helical) follow at residues 97-119, 141-161, and 168-188; these read TILT…CFLL, GVVM…ATAA, and LGTI…LAAG. An NPA 2 motif is present at residues 196–198; it reads NPA. Residues 217-237 traverse the membrane as a helical segment; it reads WVGPLVGGGLAGLVYGDVFIA.

This sequence belongs to the MIP/aquaporin (TC 1.A.8) family. TIP (TC 1.A.8.10) subfamily. As to expression, specifically expressed in roots.

The protein resides in the cell membrane. Functionally, water channel required to facilitate the transport of water across cell membrane. This chain is Aquaporin TIP2-3 (TIP2-3), found in Zea mays (Maize).